The primary structure comprises 49 residues: DNA-directed RNA polymerase subunit Rpo12 (49 aa).

Zn(2+)-binding residues include C11, C27, and C30.

This sequence belongs to the archaeal Rpo12/eukaryotic RPC10 RNA polymerase subunit family. As to quaternary structure, part of the RNA polymerase complex. The cofactor is Zn(2+).

It is found in the cytoplasm. It carries out the reaction RNA(n) + a ribonucleoside 5'-triphosphate = RNA(n+1) + diphosphate. DNA-dependent RNA polymerase (RNAP) catalyzes the transcription of DNA into RNA using the four ribonucleoside triphosphates as substrates. The polypeptide is DNA-directed RNA polymerase subunit Rpo12 (Pyrococcus furiosus (strain ATCC 43587 / DSM 3638 / JCM 8422 / Vc1)).